A 547-amino-acid chain; its full sequence is Chaperonin GroEL (547 aa).

Residues 30–33 (TLGP), Lys-51, 87–91 (DGTTT), Gly-415, 479–481 (NAA), and Asp-495 each bind ATP.

This sequence belongs to the chaperonin (HSP60) family. Forms a cylinder of 14 subunits composed of two heptameric rings stacked back-to-back. Interacts with the co-chaperonin GroES.

The protein resides in the cytoplasm. It carries out the reaction ATP + H2O + a folded polypeptide = ADP + phosphate + an unfolded polypeptide.. Its function is as follows. Together with its co-chaperonin GroES, plays an essential role in assisting protein folding. The GroEL-GroES system forms a nano-cage that allows encapsulation of the non-native substrate proteins and provides a physical environment optimized to promote and accelerate protein folding. This Pseudomonas syringae pv. syringae (strain B728a) protein is Chaperonin GroEL.